A 180-amino-acid polypeptide reads, in one-letter code: Shikimate kinase (180 aa).

Residue 19–24 participates in ATP binding; the sequence is GAGKTT. Thr-23 contacts Mg(2+). Substrate is bound by residues Asp-41, Arg-65, and Gly-87. Arg-125 contributes to the ATP binding site. A substrate-binding site is contributed by Arg-144.

This sequence belongs to the shikimate kinase family. In terms of assembly, monomer. It depends on Mg(2+) as a cofactor.

Its subcellular location is the cytoplasm. The enzyme catalyses shikimate + ATP = 3-phosphoshikimate + ADP + H(+). The protein operates within metabolic intermediate biosynthesis; chorismate biosynthesis; chorismate from D-erythrose 4-phosphate and phosphoenolpyruvate: step 5/7. In terms of biological role, catalyzes the specific phosphorylation of the 3-hydroxyl group of shikimic acid using ATP as a cosubstrate. This chain is Shikimate kinase, found in Acinetobacter baylyi (strain ATCC 33305 / BD413 / ADP1).